A 336-amino-acid chain; its full sequence is Formimidoylglutamase (336 aa).

Mn(2+) contacts are provided by His-129, Asp-160, His-162, Asp-164, Asp-257, and Asp-259.

It belongs to the arginase family. The cofactor is Mn(2+).

It catalyses the reaction N-formimidoyl-L-glutamate + H2O = formamide + L-glutamate. It participates in amino-acid degradation; L-histidine degradation into L-glutamate; L-glutamate from N-formimidoyl-L-glutamate (hydrolase route): step 1/1. Its function is as follows. Catalyzes the conversion of N-formimidoyl-L-glutamate to L-glutamate and formamide. This is Formimidoylglutamase from Vibrio vulnificus (strain YJ016).